Consider the following 115-residue polypeptide: Ubiquitin-related modifier 1 (115 aa).

1-thioglycine is present on Gly-115. Gly-115 participates in a covalent cross-link: Glycyl lysine isopeptide (Gly-Lys) (interchain with K-? in acceptor proteins).

The protein belongs to the URM1 family. C-terminal thiocarboxylation occurs in 2 steps, it is first acyl-adenylated (-COAMP) via the hesA/moeB/thiF part of UBA4, then thiocarboxylated (-COSH) via the rhodanese domain of UBA4.

The protein resides in the cytoplasm. Its pathway is tRNA modification; 5-methoxycarbonylmethyl-2-thiouridine-tRNA biosynthesis. Functionally, acts as a sulfur carrier required for 2-thiolation of mcm(5)S(2)U at tRNA wobble positions of cytosolic tRNA(Lys), tRNA(Glu) and tRNA(Gln). Serves as sulfur donor in tRNA 2-thiolation reaction by being thiocarboxylated (-COSH) at its C-terminus by the MOCS3 homolog UBA4. The sulfur is then transferred to tRNA to form 2-thiolation of mcm(5)S(2)U. Prior mcm(5) tRNA modification by the elongator complex is required for 2-thiolation. Also acts as a ubiquitin-like protein (UBL) that is covalently conjugated via an isopeptide bond to lysine residues of target proteins such as AHP1. The thiocarboxylated form serves as substrate for conjugation and oxidative stress specifically induces the formation of UBL-protein conjugates. The protein is Ubiquitin-related modifier 1 of Coccidioides immitis (strain RS) (Valley fever fungus).